We begin with the raw amino-acid sequence, 388 residues long: MASATLLKSSFLPKKSEWGATRQAAAPKPVTVSMVVRAGAYDDELVKTAKTIASPGRGILAMDESNATCGKRLASIGLENTEANRQAYRTLLVTAPGLGQYISGAILFEETLYQSTVDGKKIVDILTEQKIVPGIKVDKGLVPLAGSNNESWCQGLDGLASREAAYYQQGARFAKWRTVVSIPNGPSELAVKEAAWGLARYAAISQDNGLVPIVEPEILLDGEHGIDRTFEVAQKVWAETFFYMAENNVMFEGILLKPSMVTPGAECKDRATPEQVSDYTLKLLHRRIPPAVPGIMFLSGGQSEVEATQNLNAMNQGPNPWHVSFSYARALQNTCLKTWGGQPENVKAAQDALLLRAKANSLAQLGKYTSDGEAAEAKEGMFVKNYVY.

A chloroplast-targeting transit peptide spans 1–38; sequence MASATLLKSSFLPKKSEWGATRQAAAPKPVTVSMVVRA. Residue R72 participates in substrate binding. Residue E215 is the Proton acceptor of the active site. The active-site Schiff-base intermediate with dihydroxyacetone-P is the K257. Substrate contacts are provided by residues 299–301 and R329; that span reads SGG.

The protein belongs to the class I fructose-bisphosphate aldolase family. Homotetramer. In terms of tissue distribution, expressed in leaf mesophyll cells.

Its subcellular location is the plastid. The protein localises to the chloroplast. The protein resides in the plastoglobule. It catalyses the reaction beta-D-fructose 1,6-bisphosphate = D-glyceraldehyde 3-phosphate + dihydroxyacetone phosphate. It functions in the pathway carbohydrate degradation; glycolysis; D-glyceraldehyde 3-phosphate and glycerone phosphate from D-glucose: step 4/4. Its function is as follows. Plays a key role in glycolysis and gluconeogenesis. The protein is Fructose-bisphosphate aldolase, chloroplastic of Oryza sativa subsp. japonica (Rice).